The sequence spans 474 residues: Aspartyl/glutamyl-tRNA(Asn/Gln) amidotransferase subunit B (474 aa).

The protein belongs to the GatB/GatE family. GatB subfamily. As to quaternary structure, heterotrimer of A, B and C subunits.

The catalysed reaction is L-glutamyl-tRNA(Gln) + L-glutamine + ATP + H2O = L-glutaminyl-tRNA(Gln) + L-glutamate + ADP + phosphate + H(+). It carries out the reaction L-aspartyl-tRNA(Asn) + L-glutamine + ATP + H2O = L-asparaginyl-tRNA(Asn) + L-glutamate + ADP + phosphate + 2 H(+). Allows the formation of correctly charged Asn-tRNA(Asn) or Gln-tRNA(Gln) through the transamidation of misacylated Asp-tRNA(Asn) or Glu-tRNA(Gln) in organisms which lack either or both of asparaginyl-tRNA or glutaminyl-tRNA synthetases. The reaction takes place in the presence of glutamine and ATP through an activated phospho-Asp-tRNA(Asn) or phospho-Glu-tRNA(Gln). The polypeptide is Aspartyl/glutamyl-tRNA(Asn/Gln) amidotransferase subunit B (Limosilactobacillus reuteri (strain DSM 20016) (Lactobacillus reuteri)).